The chain runs to 131 residues: Glycine cleavage system H protein (131 aa).

In terms of domain architecture, Lipoyl-binding spans 24 to 106 (IATIGISAFA…YGEGWLLKLR (83 aa)). At K65 the chain carries N6-lipoyllysine.

It belongs to the GcvH family. In terms of assembly, the glycine cleavage system is composed of four proteins: P, T, L and H. It depends on (R)-lipoate as a cofactor.

Its function is as follows. The glycine cleavage system catalyzes the degradation of glycine. The H protein shuttles the methylamine group of glycine from the P protein to the T protein. The sequence is that of Glycine cleavage system H protein from Gloeothece citriformis (strain PCC 7424) (Cyanothece sp. (strain PCC 7424)).